The following is a 232-amino-acid chain: MNDLVISCENLNKVYQDGSNQVAVLKGVDLALQQGEMLAIVGSSGSGKSTLLHILGTLDTATSGSAKIKNQEVAKLSRTEQAAFRNKNLGFIYQFHHLLMEFSAVENVAMPLLIKGLSAKAAKVAALEMLEKVGLAHRSSHKPSALSGGERQRVAIARALVTKPALVLADEPTGNLDKQNAIKIYDLINELNKSLNTSFVVVTHDLELADKLGKIAYLDDGKLTIKESQHVA.

Positions 6–231 (ISCENLNKVY…KLTIKESQHV (226 aa)) constitute an ABC transporter domain. 42–49 (GSSGSGKS) serves as a coordination point for ATP.

It belongs to the ABC transporter superfamily. Lipoprotein translocase (TC 3.A.1.125) family. As to quaternary structure, the complex is composed of two ATP-binding proteins (LolD) and two transmembrane proteins (LolC and LolE).

The protein resides in the cell inner membrane. Its function is as follows. Part of the ABC transporter complex LolCDE involved in the translocation of mature outer membrane-directed lipoproteins, from the inner membrane to the periplasmic chaperone, LolA. Responsible for the formation of the LolA-lipoprotein complex in an ATP-dependent manner. This is Lipoprotein-releasing system ATP-binding protein LolD from Pseudoalteromonas translucida (strain TAC 125).